A 444-amino-acid polypeptide reads, in one-letter code: Proline--tRNA ligase (444 aa).

Belongs to the class-II aminoacyl-tRNA synthetase family. ProS type 2 subfamily. In terms of assembly, homodimer.

It is found in the cytoplasm. It carries out the reaction tRNA(Pro) + L-proline + ATP = L-prolyl-tRNA(Pro) + AMP + diphosphate. Its function is as follows. Catalyzes the attachment of proline to tRNA(Pro) in a two-step reaction: proline is first activated by ATP to form Pro-AMP and then transferred to the acceptor end of tRNA(Pro). The protein is Proline--tRNA ligase of Bradyrhizobium sp. (strain BTAi1 / ATCC BAA-1182).